The following is a 302-amino-acid chain: Zinc finger protein-like 1 homolog (302 aa).

The B box-type; degenerate zinc finger occupies 1–43 (MGLCKCPKRLVTNQFCFEHRVNVCEHCMVQSHPKCIVQSYLQW). The RING-type; atypical zinc finger occupies 53-101 (CNLCGTSLEQGECVRLVCYHVFHWDCLNARQAALPANTAPRGHQCPGCS). The segment at 168–233 (IHSGGERERG…RDDNKYQRRT (66 aa)) is disordered. A compositionally biased stretch (polar residues) spans 198–208 (PPSSGDFNASS). S217 is subject to Phosphoserine. A helical membrane pass occupies residues 258–278 (WFLVLSGILAFVMFIYLLAWM).

This sequence belongs to the ZFPL1 family.

It localises to the membrane. This Drosophila pseudoobscura pseudoobscura (Fruit fly) protein is Zinc finger protein-like 1 homolog.